Here is a 443-residue protein sequence, read N- to C-terminus: MSKTYHFIGIKGSGMSALALMLHQMGHNVQGSDVDKYYFTQRGLEQAGVTILPFSPNNISEDLEIIAGNAFRPDNNEELAYVIEKGYHFKRYHEFLGDFMRQFTSLGVAGAHGKTSTTGLLAHVLKNITDTSFLIGDGTGRGSANANYFVFEADEYERHFMPYHPEYSIITNIDFDHPDYFTGLEDVFNAFNDYAKQVQKGLFIYGEDPKLHEITSEAPIYYYGFEDSNDFIAKDITRTVNGSDFKVFYNQEEIGQFHVPAYGKHNILNATAVIANLYIMGIDMALVAEHLKTFSGVKRRFTEKIIDDTVIIDDFAHHPTEIIATLDAARQKYPSKEIVAIFQPHTFTRTIALLDEFAHALSQADSVYLAQIYGSAREVDNGEVKVEDLAAKIVKHSDLVTVENVSPLLNHDNAVYVFMGAGDIQLYERSFEELLANLTKNTQ.

Gly-110–Ser-116 is a binding site for ATP.

It belongs to the MurCDEF family.

The protein localises to the cytoplasm. The catalysed reaction is UDP-N-acetyl-alpha-D-muramate + L-alanine + ATP = UDP-N-acetyl-alpha-D-muramoyl-L-alanine + ADP + phosphate + H(+). The protein operates within cell wall biogenesis; peptidoglycan biosynthesis. Its function is as follows. Cell wall formation. The polypeptide is UDP-N-acetylmuramate--L-alanine ligase (Streptococcus agalactiae serotype Ia (strain ATCC 27591 / A909 / CDC SS700)).